The chain runs to 317 residues: GPI-specific phospholipase A2-like PGAP3 (317 aa).

Positions 1 to 18 are cleaved as a signal peptide; sequence MAPFLVLFLAGVVSASRG. Over 19–93 the chain is Lumenal; sequence DREPVYRDCV…QFHGKWPFSR (75 aa). An N-linked (GlcNAc...) asparagine glycan is attached at Asn-35. A helical transmembrane segment spans residues 94–114; that stretch reads FLFFQEPASALASFLNGVASL. Topologically, residues 115–132 are cytoplasmic; sequence LMLFRYRSSVPSSCQMYR. Residues 133–153 form a helical membrane-spanning segment; the sequence is TCLAFSMVSVNAWFWSTIFHT. Residues 154 to 163 are Lumenal-facing; sequence RDTALTEKMD. A helical transmembrane segment spans residues 164–180; sequence YFCASSVILHSIYLCCM. The Cytoplasmic segment spans residues 181–189; sequence RTFGLQYPS. Residues 190–210 traverse the membrane as a helical segment; the sequence is IANAFGAFLVLLFACHISYLT. At 211–219 the chain is on the lumenal side; it reads LGRFDYSYN. The chain crosses the membrane as a helical span at residues 220–240; sequence MAANTSFGIVNLMWWLAWCMW. Residues 241–251 lie on the Cytoplasmic side of the membrane; the sequence is RRFHQPYLWKC. A helical transmembrane segment spans residues 252–272; it reads VLVVVLLQSLALLELLDFPPV. Residue Met-273 is a topological domain, lumenal. Residues 274-293 traverse the membrane as a helical segment; sequence WILDAHALWHFSTIPLHFLF. Topologically, residues 294-317 are cytoplasmic; it reads YSFLRDDSLYLLKVNHDDDIPKLD.

It belongs to the PGAP3 family.

The protein resides in the golgi apparatus membrane. In terms of biological role, involved in the fatty acid remodeling steps of GPI-anchor maturation where the unsaturated acyl chain at sn-2 of inositol phosphate is replaced by a saturated stearoyl chain. May catalyze the first step of the fatty acid remodeling, by removing the unsaturated acyl chain at sn-2 of inositol phosphate, generating a lyso-GPI intermediate. The fatty acid remodeling steps is critical for the integration of GPI-APs into lipid rafts. The polypeptide is GPI-specific phospholipase A2-like PGAP3 (Xenopus laevis (African clawed frog)).